A 319-amino-acid chain; its full sequence is tRNA-cytidine(32) 2-sulfurtransferase (319 aa).

The PP-loop motif signature appears at 45–50; the sequence is SGGKDS. Residues Cys-120, Cys-123, and Cys-211 each contribute to the [4Fe-4S] cluster site.

The protein belongs to the TtcA family. In terms of assembly, homodimer. Requires Mg(2+) as cofactor. It depends on [4Fe-4S] cluster as a cofactor.

It is found in the cytoplasm. It carries out the reaction cytidine(32) in tRNA + S-sulfanyl-L-cysteinyl-[cysteine desulfurase] + AH2 + ATP = 2-thiocytidine(32) in tRNA + L-cysteinyl-[cysteine desulfurase] + A + AMP + diphosphate + H(+). Its pathway is tRNA modification. Functionally, catalyzes the ATP-dependent 2-thiolation of cytidine in position 32 of tRNA, to form 2-thiocytidine (s(2)C32). The sulfur atoms are provided by the cysteine/cysteine desulfurase (IscS) system. The polypeptide is tRNA-cytidine(32) 2-sulfurtransferase (Shewanella woodyi (strain ATCC 51908 / MS32)).